The primary structure comprises 121 residues: Large ribosomal subunit protein uL14 (121 aa).

The protein belongs to the universal ribosomal protein uL14 family. Part of the 50S ribosomal subunit. Forms a cluster with proteins L3 and L19. In the 70S ribosome, L14 and L19 interact and together make contacts with the 16S rRNA in bridges B5 and B8.

Functionally, binds to 23S rRNA. Forms part of two intersubunit bridges in the 70S ribosome. The chain is Large ribosomal subunit protein uL14 from Mycoplasmopsis synoviae (strain 53) (Mycoplasma synoviae).